The primary structure comprises 278 residues: MVGSRTWCESEMLFVQPDAGTKEELYYRVTPKPGQTQANFNWTPHKVRFHDARPQRDSFDLNTHGFTFVEDAISPQLIERIRADDTAAVEGDYFASVAALVKRVTGADHVVCFSPYTRKENSEKGIFGQPARTVHCDHTPAAAIELTHKLCGEDAVRLLQSRFRAFSVWRPLVEPVLDWPLAVVDGRTIAPDDLHPVHWLRYEKKDTEPPFQLSFSETQKWYYLSRQRSDEVSIVKNYDSEVVPSPRSAHCAFKHPFVPKDAPPRESIDVRCLVFGGR.

It belongs to the asaB hydroxylase/desaturase family.

The enzyme catalyses asnovolin A + 2-oxoglutarate + 2 O2 = fumigatonoid A + succinate + CO2. Its pathway is secondary metabolite biosynthesis; terpenoid biosynthesis. Fe(II)/2-oxoglutarate-dependent dioxygenase; part of the gene cluster that mediates the biosynthesis of novofumigatonin, a heavily oxygenated meroterpenoid containing a unique orthoester moiety. The first step of the pathway is the synthesis of 3,5-dimethylorsellinic acid (DMOA) by the polyketide synthase nvfA via condensation of one acetyl-CoA starter unit with 3 malonyl-CoA units and 2 methylations. DMOA is then converted to farnesyl-DMOA by the farnesyltransferase nvfB. Epoxydation by FAD-dependent monooxygenase nvfK, followed by a protonation-initiated cyclization catalyzed by the terpene cyclase nvfL leads to the production of asnavolin H. The short chain dehydrogenase nvfC then as a 3-OH dehydrogenase of asnovolin H to yield chemesin D. There are two branches to synthesize asnovolin A from chemesin D. In one branch, chemesin D undergoes Baeyer-Villiger oxidation by nvfH, methylation by nvfJ, and enoyl reduction by the nvfM D enoylreductase that reduces the double bond between C-5'and C-6', to form respectively asnovolin I, asnovolin K, and asnovolin A. In the other branch, the methylation precedes the Baeyer-Villiger oxidation and the enoyl reduction to yield asnovolin A via the asnovolin J intermediate. Asnovolin A is further converted to fumigatonoid A by the Fe(II)/2-oxoglutarate-dependent dioxygenase nvfI that catalyzes an endoperoxidation reaction. The alpha/beta hydrolase nvfD then acts as an epimerase that converts fumigatonoid A to its C-5' epimer, which then undergoes spontaneous or nvfD-catalyzed lactonization. The following step utilizes the ketoreductase nvfG to produce fumigatonoid B. The dioxygenase nvfE further converts fumigatonoid B into fumigatonoid C. Finally the Fe(II)/2-oxoglutarate-dependent dioxygenase nvfF catalyzes two rounds of oxidation to transform fumigatonoid C into the end product, novofumigatonin A. The polypeptide is Fe(II)/2-oxoglutarate-dependent dioxygenase nvfI (Aspergillus novofumigatus (strain IBT 16806)).